The sequence spans 101 residues: MSRKSVVQRNLKRVAISAALSEKRKALVAIIKDESLSMSERFAAQLKLSKMPRDSSYIRIRNRCLITGRPRGYYRKFKMSRIVLRQLGSIGQIPGLTKSSW.

It belongs to the universal ribosomal protein uS14 family. Part of the 30S ribosomal subunit. Contacts proteins S3 and S10.

Its function is as follows. Binds 16S rRNA, required for the assembly of 30S particles and may also be responsible for determining the conformation of the 16S rRNA at the A site. The polypeptide is Small ribosomal subunit protein uS14 (Anaplasma phagocytophilum (strain HZ)).